Reading from the N-terminus, the 279-residue chain is Oxygen-dependent coproporphyrinogen-III oxidase (279 aa).

Residue Ser102 participates in substrate binding. The a divalent metal cation site is built by His106 and His116. Residue His116 is the Proton donor of the active site. 118–120 is a binding site for substrate; sequence NTR. A divalent metal cation-binding residues include His149 and His179. The tract at residues 244–279 is important for dimerization; the sequence is YVEFNLLYDRGTKFGLMTDGNIEAILMSLPPVVKFN.

This sequence belongs to the aerobic coproporphyrinogen-III oxidase family. Homodimer. A divalent metal cation serves as cofactor.

Its subcellular location is the cytoplasm. The catalysed reaction is coproporphyrinogen III + O2 + 2 H(+) = protoporphyrinogen IX + 2 CO2 + 2 H2O. It participates in porphyrin-containing compound metabolism; protoporphyrin-IX biosynthesis; protoporphyrinogen-IX from coproporphyrinogen-III (O2 route): step 1/1. Involved in the heme biosynthesis. Catalyzes the aerobic oxidative decarboxylation of propionate groups of rings A and B of coproporphyrinogen-III to yield the vinyl groups in protoporphyrinogen-IX. The protein is Oxygen-dependent coproporphyrinogen-III oxidase of Rickettsia typhi (strain ATCC VR-144 / Wilmington).